Here is an 81-residue protein sequence, read N- to C-terminus: Photosystem I iron-sulfur center (81 aa).

4Fe-4S ferredoxin-type domains lie at 2–31 (SHAV…MVPW) and 37–68 (GQIA…IRVY). Residues C11, C14, C17, C21, C48, C51, C54, and C58 each coordinate [4Fe-4S] cluster.

In terms of assembly, the cyanobacterial PSI reaction center is composed of one copy each of PsaA,B,C,D,E,F,I,J,K,L,M and X, and forms trimeric complexes. The cofactor is [4Fe-4S] cluster.

It is found in the cellular thylakoid membrane. It catalyses the reaction reduced [plastocyanin] + hnu + oxidized [2Fe-2S]-[ferredoxin] = oxidized [plastocyanin] + reduced [2Fe-2S]-[ferredoxin]. In terms of biological role, apoprotein for the two 4Fe-4S centers FA and FB of photosystem I (PSI); essential for photochemical activity. FB is the terminal electron acceptor of PSI, donating electrons to ferredoxin. The C-terminus interacts with PsaA/B/D and helps assemble the protein into the PSI complex. Required for binding of PsaD and PsaE to PSI. PSI is a plastocyanin/cytochrome c6-ferredoxin oxidoreductase, converting photonic excitation into a charge separation, which transfers an electron from the donor P700 chlorophyll pair to the spectroscopically characterized acceptors A0, A1, FX, FA and FB in turn. This chain is Photosystem I iron-sulfur center, found in Synechococcus sp. (strain WH8103).